A 285-amino-acid chain; its full sequence is Bifunctional protein FolD (285 aa).

NADP(+) is bound by residues 166-168 and I232; that span reads GAS.

The protein belongs to the tetrahydrofolate dehydrogenase/cyclohydrolase family. As to quaternary structure, homodimer.

It catalyses the reaction (6R)-5,10-methylene-5,6,7,8-tetrahydrofolate + NADP(+) = (6R)-5,10-methenyltetrahydrofolate + NADPH. The enzyme catalyses (6R)-5,10-methenyltetrahydrofolate + H2O = (6R)-10-formyltetrahydrofolate + H(+). The protein operates within one-carbon metabolism; tetrahydrofolate interconversion. Its function is as follows. Catalyzes the oxidation of 5,10-methylenetetrahydrofolate to 5,10-methenyltetrahydrofolate and then the hydrolysis of 5,10-methenyltetrahydrofolate to 10-formyltetrahydrofolate. The polypeptide is Bifunctional protein FolD (Aliivibrio fischeri (strain MJ11) (Vibrio fischeri)).